The primary structure comprises 184 residues: uncharacterized protein (184 aa).

The helical transmembrane segment at 35-55 threads the bilayer; the sequence is LSFLIYILYTFSISGLSTFVI.

It localises to the membrane. This is an uncharacterized protein from Schizosaccharomyces pombe (strain 972 / ATCC 24843) (Fission yeast).